The primary structure comprises 145 residues: D-aminoacyl-tRNA deacylase (145 aa).

Residues 137–138 (GP) carry the Gly-cisPro motif, important for rejection of L-amino acids motif.

Belongs to the DTD family. As to quaternary structure, homodimer.

The protein localises to the cytoplasm. The enzyme catalyses glycyl-tRNA(Ala) + H2O = tRNA(Ala) + glycine + H(+). It catalyses the reaction a D-aminoacyl-tRNA + H2O = a tRNA + a D-alpha-amino acid + H(+). An aminoacyl-tRNA editing enzyme that deacylates mischarged D-aminoacyl-tRNAs. Also deacylates mischarged glycyl-tRNA(Ala), protecting cells against glycine mischarging by AlaRS. Acts via tRNA-based rather than protein-based catalysis; rejects L-amino acids rather than detecting D-amino acids in the active site. By recycling D-aminoacyl-tRNA to D-amino acids and free tRNA molecules, this enzyme counteracts the toxicity associated with the formation of D-aminoacyl-tRNA entities in vivo and helps enforce protein L-homochirality. In Legionella pneumophila (strain Lens), this protein is D-aminoacyl-tRNA deacylase.